We begin with the raw amino-acid sequence, 354 residues long: Short-chain dehydrogenase/reductase SAT2 (354 aa).

NADP(+) is bound by residues isoleucine 31, aspartate 85, arginine 201, and valine 233.

Belongs to the short-chain dehydrogenases/reductases (SDR) family.

The protein operates within mycotoxin biosynthesis. Its function is as follows. Short-chain dehydrogenase/reductase; part of the satratoxin SC1 cluster involved in the biosynthesis of satratoxins, trichothecene mycotoxins that are associated with human food poisonings. Satratoxins are suggested to be made by products of multiple gene clusters (SC1, SC2 and SC3) that encode 21 proteins in all, including polyketide synthases, acetyltransferases, and other enzymes expected to modify the trichothecene skeleton. SC1 encodes 10 proteins, SAT1 to SAT10. The largest are SAT8, which encodes a putative polyketide synthase (PKS) with a conventional non-reducing architecture, and SAT10, a putative protein containing four ankyrin repeats and thus may be involved in protein scaffolding. The putative short-chain reductase SAT3 may assist the PKS in some capacity. SAT6 contains a secretory lipase domain and acts probably as a trichothecene esterase. SAT5 encodes a putative acetyltransferase, and so, with SAT6, may affect endogenous protection from toxicity. The probable transcription factor SAT9 may regulate the expression of the SC1 cluster. SC2 encodes proteins SAT11 to SAT16, the largest of which encodes the putative reducing PKS SAT13. SAT11 is a cytochrome P450 monooxygenase, while SAT14 and SAT16 are probable acetyltransferases. The SC2 cluster may be regulated by the transcription factor SAT15. SC3 is a small cluster that encodes 5 proteins, SAT17 to SAT21. SAT21 is a putative MFS-type transporter which may have a role in exporting secondary metabolites. The four other proteins putatively encoded in SC3 include the taurine hydroxylase-like protein SAT17, the O-methyltransferase SAT18, the acetyltransferase SAT19, and the Cys6-type zinc finger SAT20, the latter being probably involved in regulation of SC3 expression. In Stachybotrys chartarum (strain CBS 109288 / IBT 7711) (Toxic black mold), this protein is Short-chain dehydrogenase/reductase SAT2.